The sequence spans 433 residues: MDKFVIRGGTPLLGNVRVSGAKNAALPAMAAALLTEEPVILENIPQVRDIITERNLLQAMGAEVELGYGRAHHRTTLCCRNLVNPEASYELVKTMRASTLVLGPLVARTGEARVSLPGGCAIGARPIDLHIKGLEKLGAEITQEHGYIKAKATRLKGNHIVFEKITVTGTEDLLMAATLADGETVMENCAREPEVTDLAHLLVKMGAKIEGIGTSTLKITGVEKLHGAKHRIIPDRIEAGTFIIAGALTGGDLMVQNCDPSHLGALLAKLEENGVKIRSNGDSVRVMSEGTLKPGDASTEEYPGFPTDMQAQYMALATQCEGASVVVENIFENRFMHAQELVRMGANIKIEGRRAIVRGKTPLSGAAVLASDLRASASLVLAALVAEGETIIDRVYHIDRGYEHIEEKLRGLGAEIKRIGELFPKKASPVAVS.

K22 to N23 is a phosphoenolpyruvate binding site. R96 is a UDP-N-acetyl-alpha-D-glucosamine binding site. C120 acts as the Proton donor in catalysis. C120 bears the 2-(S-cysteinyl)pyruvic acid O-phosphothioketal mark. UDP-N-acetyl-alpha-D-glucosamine is bound by residues R125 to L129, D308, and I330.

Belongs to the EPSP synthase family. MurA subfamily.

It localises to the cytoplasm. The catalysed reaction is phosphoenolpyruvate + UDP-N-acetyl-alpha-D-glucosamine = UDP-N-acetyl-3-O-(1-carboxyvinyl)-alpha-D-glucosamine + phosphate. It participates in cell wall biogenesis; peptidoglycan biosynthesis. Functionally, cell wall formation. Adds enolpyruvyl to UDP-N-acetylglucosamine. The sequence is that of UDP-N-acetylglucosamine 1-carboxyvinyltransferase from Koribacter versatilis (strain Ellin345).